The primary structure comprises 371 residues: Anhydro-N-acetylmuramic acid kinase (371 aa).

12-20 is an ATP binding site; that stretch reads GTVLDGNID.

Belongs to the anhydro-N-acetylmuramic acid kinase family.

It carries out the reaction 1,6-anhydro-N-acetyl-beta-muramate + ATP + H2O = N-acetyl-D-muramate 6-phosphate + ADP + H(+). It functions in the pathway amino-sugar metabolism; 1,6-anhydro-N-acetylmuramate degradation. The protein operates within cell wall biogenesis; peptidoglycan recycling. Functionally, catalyzes the specific phosphorylation of 1,6-anhydro-N-acetylmuramic acid (anhMurNAc) with the simultaneous cleavage of the 1,6-anhydro ring, generating MurNAc-6-P. Is required for the utilization of anhMurNAc either imported from the medium or derived from its own cell wall murein, and thus plays a role in cell wall recycling. The protein is Anhydro-N-acetylmuramic acid kinase of Mesorhizobium japonicum (strain LMG 29417 / CECT 9101 / MAFF 303099) (Mesorhizobium loti (strain MAFF 303099)).